We begin with the raw amino-acid sequence, 116 residues long: Large ribosomal subunit protein uL24 (116 aa).

Residues 1 to 27 are disordered; that stretch reads MAGRKSSTPTRHKMHVKTGDTVQVISG.

This sequence belongs to the universal ribosomal protein uL24 family. In terms of assembly, part of the 50S ribosomal subunit.

One of two assembly initiator proteins, it binds directly to the 5'-end of the 23S rRNA, where it nucleates assembly of the 50S subunit. Functionally, one of the proteins that surrounds the polypeptide exit tunnel on the outside of the subunit. In Picosynechococcus sp. (strain ATCC 27264 / PCC 7002 / PR-6) (Agmenellum quadruplicatum), this protein is Large ribosomal subunit protein uL24.